Here is a 244-residue protein sequence, read N- to C-terminus: ATP synthase subunit b 2 (244 aa).

Residues 2–22 form a helical membrane-spanning segment; it reads TVDWWTIGLQVINVSVLIWLL.

Belongs to the ATPase B chain family. F-type ATPases have 2 components, F(1) - the catalytic core - and F(0) - the membrane proton channel. F(1) has five subunits: alpha(3), beta(3), gamma(1), delta(1), epsilon(1). F(0) has three main subunits: a(1), b(2) and c(10-14). The alpha and beta chains form an alternating ring which encloses part of the gamma chain. F(1) is attached to F(0) by a central stalk formed by the gamma and epsilon chains, while a peripheral stalk is formed by the delta and b chains.

Its subcellular location is the cell inner membrane. Functionally, f(1)F(0) ATP synthase produces ATP from ADP in the presence of a proton or sodium gradient. F-type ATPases consist of two structural domains, F(1) containing the extramembraneous catalytic core and F(0) containing the membrane proton channel, linked together by a central stalk and a peripheral stalk. During catalysis, ATP synthesis in the catalytic domain of F(1) is coupled via a rotary mechanism of the central stalk subunits to proton translocation. Component of the F(0) channel, it forms part of the peripheral stalk, linking F(1) to F(0). In Gluconobacter oxydans (strain 621H) (Gluconobacter suboxydans), this protein is ATP synthase subunit b 2.